The chain runs to 226 residues: LysM and putative peptidoglycan-binding domain-containing protein 1 (226 aa).

2 positions are modified to phosphoserine: serine 23 and serine 33. Residues leucine 40 to isoleucine 84 enclose the LysM domain. The segment at asparagine 95–phenylalanine 156 is disordered. Over residues aspartate 98–glutamate 107 the composition is skewed to acidic residues. Serine 99 carries the post-translational modification Phosphoserine. Over residues glutamine 142–leucine 151 the composition is skewed to polar residues. Residues serine 165, serine 180, serine 193, and serine 211 each carry the phosphoserine modification. Positions alanine 170 to leucine 226 are disordered. A compositionally biased stretch (basic and acidic residues) spans threonine 215 to leucine 226.

In Mus musculus (Mouse), this protein is LysM and putative peptidoglycan-binding domain-containing protein 1 (Lysmd1).